The following is a 424-amino-acid chain: Serine--tRNA ligase (424 aa).

231 to 233 (TAE) provides a ligand contact to L-serine. Residue 262–264 (RSE) coordinates ATP. Glu-285 lines the L-serine pocket. 349 to 352 (EISS) contacts ATP. Residue Ser-385 coordinates L-serine.

This sequence belongs to the class-II aminoacyl-tRNA synthetase family. Type-1 seryl-tRNA synthetase subfamily. In terms of assembly, homodimer. The tRNA molecule binds across the dimer.

The protein localises to the cytoplasm. The enzyme catalyses tRNA(Ser) + L-serine + ATP = L-seryl-tRNA(Ser) + AMP + diphosphate + H(+). It carries out the reaction tRNA(Sec) + L-serine + ATP = L-seryl-tRNA(Sec) + AMP + diphosphate + H(+). Its pathway is aminoacyl-tRNA biosynthesis; selenocysteinyl-tRNA(Sec) biosynthesis; L-seryl-tRNA(Sec) from L-serine and tRNA(Sec): step 1/1. In terms of biological role, catalyzes the attachment of serine to tRNA(Ser). Is also able to aminoacylate tRNA(Sec) with serine, to form the misacylated tRNA L-seryl-tRNA(Sec), which will be further converted into selenocysteinyl-tRNA(Sec). In Bacillus pumilus (strain SAFR-032), this protein is Serine--tRNA ligase.